The following is a 332-amino-acid chain: tRNA-dihydrouridine(20/20a) synthase (332 aa).

Residues 22 to 24 and Gln-75 contribute to the FMN site; that span reads PMM. Cys-105 (proton donor) is an active-site residue. Residues Lys-144, His-177, 217 to 219, and 239 to 240 each bind FMN; these read NGG and GR.

Belongs to the Dus family. DusA subfamily. The cofactor is FMN.

It catalyses the reaction 5,6-dihydrouridine(20) in tRNA + NADP(+) = uridine(20) in tRNA + NADPH + H(+). The catalysed reaction is 5,6-dihydrouridine(20) in tRNA + NAD(+) = uridine(20) in tRNA + NADH + H(+). The enzyme catalyses 5,6-dihydrouridine(20a) in tRNA + NADP(+) = uridine(20a) in tRNA + NADPH + H(+). It carries out the reaction 5,6-dihydrouridine(20a) in tRNA + NAD(+) = uridine(20a) in tRNA + NADH + H(+). Functionally, catalyzes the synthesis of 5,6-dihydrouridine (D), a modified base found in the D-loop of most tRNAs, via the reduction of the C5-C6 double bond in target uridines. Specifically modifies U20 and U20a in tRNAs. This is tRNA-dihydrouridine(20/20a) synthase from Xylella fastidiosa (strain Temecula1 / ATCC 700964).